A 281-amino-acid polypeptide reads, in one-letter code: Elongation factor Ts (281 aa).

Positions 80 to 83 are involved in Mg(2+) ion dislocation from EF-Tu; it reads TDFV.

It belongs to the EF-Ts family.

It localises to the cytoplasm. Functionally, associates with the EF-Tu.GDP complex and induces the exchange of GDP to GTP. It remains bound to the aminoacyl-tRNA.EF-Tu.GTP complex up to the GTP hydrolysis stage on the ribosome. This Vibrio atlanticus (strain LGP32) (Vibrio splendidus (strain Mel32)) protein is Elongation factor Ts.